A 65-amino-acid polypeptide reads, in one-letter code: UPF0434 protein Mmwyl1_2153 (65 aa).

It belongs to the UPF0434 family.

This Marinomonas sp. (strain MWYL1) protein is UPF0434 protein Mmwyl1_2153.